The primary structure comprises 301 residues: Homoserine O-acetyltransferase (301 aa).

Cys142 functions as the Acyl-thioester intermediate in the catalytic mechanism. Substrate-binding residues include Lys163 and Ser192. His235 serves as the catalytic Proton acceptor. Glu237 is a catalytic residue. Arg249 is a binding site for substrate.

It belongs to the MetA family.

The protein resides in the cytoplasm. It carries out the reaction L-homoserine + acetyl-CoA = O-acetyl-L-homoserine + CoA. The protein operates within amino-acid biosynthesis; L-methionine biosynthesis via de novo pathway; O-acetyl-L-homoserine from L-homoserine: step 1/1. Functionally, transfers an acetyl group from acetyl-CoA to L-homoserine, forming acetyl-L-homoserine. In Bacillus mycoides (strain KBAB4) (Bacillus weihenstephanensis), this protein is Homoserine O-acetyltransferase.